The primary structure comprises 767 residues: Transducin-like enhancer protein 2 (767 aa).

Residues 1–152 (MYPQGRHPTP…SLLGQQNQLQ (152 aa)) form a q domain region. The segment at 153-215 (PLSHAPPVPL…SRVDRAASRS (63 aa)) is GP domain. Basic and acidic residues predominate over residues 198-212 (RVGVDAEGSRVDRAA). Disordered regions lie at residues 198–257 (RVGV…EEDK), 264–283 (VDEDQPSEPPSPVTTPCGKA), and 296–346 (SPAS…SSAS). Positions 216 to 279 (SSPSPPESLV…SEPPSPVTTP (64 aa)) are ccN domain. A Nuclear localization signal motif is present at residues 238-242 (KQQRA). Ser-253 is modified (phosphoserine; by CK2). Ser-274 bears the Phosphoserine; by CDK1 mark. Residue Thr-278 is modified to Phosphothreonine; by CDK1. The SP domain stretch occupies residues 280–447 (CGKAPLCIPA…VAKPAYSFHV (168 aa)). A compositionally biased stretch (low complexity) spans 296 to 309 (SPASLASSLGSPLP). Ser-306 is modified (phosphoserine). The span at 323 to 346 (TPASRSCGTSPPQDSSTPGPSSAS) shows a compositional bias: polar residues. WD repeat units lie at residues 479 to 517 (AHGEVVCAVTISSSTQHVYTGGKGCVKVWDVGQPGSKTP), 525 to 564 (NRDNYIRSCKLLPDGQSLIVGGEASTLSIWDLAAPTPRIK), 569 to 608 (SSAPACYALAVSPDAKVCFSCCSDGNIVVWDLQNQAMVRQ), 611 to 650 (GHTDGASCIDISDYGTRLWTGGLDNTVRCWDLREGRQLQQ), 693 to 732 (LHESCVLSLKFASCGRWFVSTGKDNLLNAWRTPYGASIFQ), and 734 to 766 (KESSSVLSCDISRNNKYIVTGSGDKKATVYEVV).

Belongs to the WD repeat Groucho/TLE family. As to quaternary structure, homooligomer and heterooligomer with other family members. Binds LEF1, TCF7, TCF7L1, TCF7L2, UTY, HES1 and HES5. In terms of processing, ubiquitinated by XIAP/BIRC4. Expressed in bone marrow-derived macrophages.

The protein localises to the nucleus. Functionally, transcriptional corepressor that binds to a number of transcription factors. Inhibits the transcriptional activation mediated by CTNNB1 and TCF family members in Wnt signaling. The effects of full-length TLE family members may be modulated by association with dominant-negative AES. The polypeptide is Transducin-like enhancer protein 2 (Tle2) (Mus musculus (Mouse)).